We begin with the raw amino-acid sequence, 333 residues long: Ketol-acid reductoisomerase (NADP(+)) (333 aa).

The 181-residue stretch at 2-182 folds into the KARI N-terminal Rossmann domain; it reads AELFYDADAD…GGTRAGVIKT (181 aa). Residues 25–28, Ser51, Ser53, and 83–86 each bind NADP(+); these read YGSQ and DPIQ. The active site involves His108. Gly134 is a binding site for NADP(+). The 146-residue stretch at 183–328 folds into the KARI C-terminal knotted domain; the sequence is TFTEETETDL…KELRKLMSWV (146 aa). Residues Asp191, Glu195, Glu227, and Glu231 each contribute to the Mg(2+) site. Residue Ser252 coordinates substrate.

This sequence belongs to the ketol-acid reductoisomerase family. Mg(2+) is required as a cofactor.

It catalyses the reaction (2R)-2,3-dihydroxy-3-methylbutanoate + NADP(+) = (2S)-2-acetolactate + NADPH + H(+). It carries out the reaction (2R,3R)-2,3-dihydroxy-3-methylpentanoate + NADP(+) = (S)-2-ethyl-2-hydroxy-3-oxobutanoate + NADPH + H(+). The protein operates within amino-acid biosynthesis; L-isoleucine biosynthesis; L-isoleucine from 2-oxobutanoate: step 2/4. It functions in the pathway amino-acid biosynthesis; L-valine biosynthesis; L-valine from pyruvate: step 2/4. In terms of biological role, involved in the biosynthesis of branched-chain amino acids (BCAA). Catalyzes an alkyl-migration followed by a ketol-acid reduction of (S)-2-acetolactate (S2AL) to yield (R)-2,3-dihydroxy-isovalerate. In the isomerase reaction, S2AL is rearranged via a Mg-dependent methyl migration to produce 3-hydroxy-3-methyl-2-ketobutyrate (HMKB). In the reductase reaction, this 2-ketoacid undergoes a metal-dependent reduction by NADPH to yield (R)-2,3-dihydroxy-isovalerate. This Streptomyces avermitilis (strain ATCC 31267 / DSM 46492 / JCM 5070 / NBRC 14893 / NCIMB 12804 / NRRL 8165 / MA-4680) protein is Ketol-acid reductoisomerase (NADP(+)).